A 298-amino-acid polypeptide reads, in one-letter code: Inosose dehydratase (298 aa).

The protein belongs to the IolE/MocC family. The cofactor is glutathione. It depends on Co(2+) as a cofactor. Requires Mn(2+) as cofactor.

The enzyme catalyses scyllo-inosose = 3D-3,5/4-trihydroxycyclohexane-1,2-dione + H2O. It functions in the pathway polyol metabolism; myo-inositol degradation into acetyl-CoA; acetyl-CoA from myo-inositol: step 2/7. Functionally, catalyzes the dehydration of inosose (2-keto-myo-inositol, 2KMI or 2,4,6/3,5-pentahydroxycyclohexanone) to 3D-(3,5/4)-trihydroxycyclohexane-1,2-dione (D-2,3-diketo-4-deoxy-epi-inositol). The sequence is that of Inosose dehydratase from Clostridium tetani (strain Massachusetts / E88).